The chain runs to 97 residues: Kunitz-type trypsin inhibitor 1 (97 aa).

Belongs to the protease inhibitor I3 (leguminous Kunitz-type inhibitor) family.

Exhibits Kunitz trypsin protease inhibitor activity. The polypeptide is Kunitz-type trypsin inhibitor 1 (Selenicereus costaricensis (Red-fleshed dragon fruit)).